Here is a 399-residue protein sequence, read N- to C-terminus: Centrosomal protein 43 (399 aa).

The region spanning 70 to 102 is the LisH domain; it reads DGRLVASLVAEFLQFFNLDFTLAVFQPETSTLQ. Disordered regions lie at residues 139-218 and 232-308; these read EKGP…SSLH and NRTL…SESK. Thr143 carries the post-translational modification Phosphothreonine. A phosphoserine mark is found at Ser152, Ser156, and Ser160. Residues 163–172 are compositionally biased toward polar residues; the sequence is GKTSAQTTPS. Thr170 is modified (phosphothreonine). Positions 175–186 are enriched in basic residues; that stretch reads PRYKGQGKKKTS. At Ser202 the chain carries Phosphoserine. Positions 205–218 are enriched in low complexity; it reads SVSLSEPKSKSSLH. At Thr234 the chain carries Phosphothreonine. Acidic residues predominate over residues 245–256; sequence PDEDDMEGDSFF. Residues 259-275 show a composition bias toward basic and acidic residues; that stretch reads PIPKPEKTYGLRKEPRK. The segment covering 286-302 has biased composition (low complexity); that stretch reads APPLKSGLSSLAGAPSL. Phosphoserine occurs at positions 301 and 326. Positions 331 to 353 are disordered; sequence TGEDDDYVDDFNSTSHRSEKSEI. Tyr337 carries the post-translational modification Phosphotyrosine.

Belongs to the CEP43 family. Homodimer. Part of a ternary complex that contains CEP350, CEP43 and MAPRE1. Interacts directly with CEP350 and MAPRE1. Interacts with CEP19. Interacts (via N-terminus) with CEP350 (via C-terminus). As to expression, ubiquitous. Highly expressed in heart, liver, muscle, kidney, intestine, colon, adrenal gland, prostate, testis, and pancreas.

The protein localises to the cytoplasm. The protein resides in the cytoskeleton. It is found in the microtubule organizing center. Its subcellular location is the centrosome. It localises to the centriole. The protein localises to the cilium basal body. Functionally, required for anchoring microtubules to the centrosomes. Required for ciliation. This Homo sapiens (Human) protein is Centrosomal protein 43.